Here is a 329-residue protein sequence, read N- to C-terminus: uncharacterized protein (329 aa).

2 disordered regions span residues 16–41 and 183–229; these read RCGY…SRIC and LENK…KFEP. A compositionally biased stretch (basic and acidic residues) spans 213–229; sequence SNDKANRGEKGEAKFEP.

Expressed in testis and epididymis. Expressed at lower levels in ovary.

Its function is as follows. Dispensable for normal development and fertility. This is an uncharacterized protein from Mus musculus (Mouse).